The following is an 84-amino-acid chain: Small ribosomal subunit protein uS17 (84 aa).

This sequence belongs to the universal ribosomal protein uS17 family. In terms of assembly, part of the 30S ribosomal subunit.

Functionally, one of the primary rRNA binding proteins, it binds specifically to the 5'-end of 16S ribosomal RNA. The chain is Small ribosomal subunit protein uS17 from Histophilus somni (strain 129Pt) (Haemophilus somnus).